The primary structure comprises 254 residues: Imidazole glycerol phosphate synthase subunit HisF (254 aa).

Residues Asp-12 and Asp-131 contribute to the active site.

It belongs to the HisA/HisF family. Heterodimer of HisH and HisF.

It localises to the cytoplasm. It catalyses the reaction 5-[(5-phospho-1-deoxy-D-ribulos-1-ylimino)methylamino]-1-(5-phospho-beta-D-ribosyl)imidazole-4-carboxamide + L-glutamine = D-erythro-1-(imidazol-4-yl)glycerol 3-phosphate + 5-amino-1-(5-phospho-beta-D-ribosyl)imidazole-4-carboxamide + L-glutamate + H(+). It functions in the pathway amino-acid biosynthesis; L-histidine biosynthesis; L-histidine from 5-phospho-alpha-D-ribose 1-diphosphate: step 5/9. IGPS catalyzes the conversion of PRFAR and glutamine to IGP, AICAR and glutamate. The HisF subunit catalyzes the cyclization activity that produces IGP and AICAR from PRFAR using the ammonia provided by the HisH subunit. This is Imidazole glycerol phosphate synthase subunit HisF from Desulfitobacterium hafniense (strain Y51).